The sequence spans 449 residues: 3-phosphoshikimate 1-carboxyvinyltransferase (449 aa).

Residues 1–23 are disordered; sequence MSHSASPKPATARRSEALTGEIR. 3-phosphoshikimate contacts are provided by K28, S29, and R33. K28 is a binding site for phosphoenolpyruvate. Positions 100 and 128 each coordinate phosphoenolpyruvate. Residues S173, Q175, D326, and K353 each coordinate 3-phosphoshikimate. Q175 provides a ligand contact to phosphoenolpyruvate. Catalysis depends on D326, which acts as the Proton acceptor. Phosphoenolpyruvate is bound by residues R357 and R402.

The protein belongs to the EPSP synthase family. As to quaternary structure, monomer.

The protein resides in the cytoplasm. It catalyses the reaction 3-phosphoshikimate + phosphoenolpyruvate = 5-O-(1-carboxyvinyl)-3-phosphoshikimate + phosphate. The protein operates within metabolic intermediate biosynthesis; chorismate biosynthesis; chorismate from D-erythrose 4-phosphate and phosphoenolpyruvate: step 6/7. Functionally, catalyzes the transfer of the enolpyruvyl moiety of phosphoenolpyruvate (PEP) to the 5-hydroxyl of shikimate-3-phosphate (S3P) to produce enolpyruvyl shikimate-3-phosphate and inorganic phosphate. This chain is 3-phosphoshikimate 1-carboxyvinyltransferase, found in Pseudomonas sp. (strain PG2982).